The following is a 197-amino-acid chain: Nucleoid occlusion factor SlmA (197 aa).

The HTH tetR-type domain maps to 7 to 67; the sequence is INRREHILQC…GLIEFIEDAI (61 aa). The H-T-H motif DNA-binding region spans 30-49; that stretch reads TTAKLAAEVGVSEAALYRHF. Residues 110 to 130 adopt a coiled-coil conformation; that stretch reads ALLGENERLRSRIDVLFAKIE.

The protein belongs to the nucleoid occlusion factor SlmA family. In terms of assembly, homodimer. Interacts with FtsZ.

It localises to the cytoplasm. The protein localises to the nucleoid. Required for nucleoid occlusion (NO) phenomenon, which prevents Z-ring formation and cell division over the nucleoid. Acts as a DNA-associated cell division inhibitor that binds simultaneously chromosomal DNA and FtsZ, and disrupts the assembly of FtsZ polymers. SlmA-DNA-binding sequences (SBS) are dispersed on non-Ter regions of the chromosome, preventing FtsZ polymerization at these regions. This Shewanella frigidimarina (strain NCIMB 400) protein is Nucleoid occlusion factor SlmA.